The primary structure comprises 301 residues: MNRNGSTKDPRRMTGAATGEISRYFNDKAPKDIRRAIEKADKDDILSTTYPYDAEMTAKDYRAQMEALQIELVKLQAWIKQSGARVALLFEGRDAAGKGGTIKRFRENLNPRGARVVALSKPTEAERSQWYFQRYIQHLPSAGELVFYDRSWYNRGVVEHVFGWCDEEQRERFFRQVMPFEHDLVDDGIHLFKFWLNVGRAEQLRRFHDRERDPLKQWKLSPVDIAGLDKWEAYTTAISQTLTRSHSDRAPWTVIRSDDKKRARLAAIRTVLSGIDYDNKDRAAVGQPDAAICGGPDIWDA.

Residues 1–12 are compositionally biased toward basic and acidic residues; that stretch reads MNRNGSTKDPRR. The segment at 1–21 is disordered; sequence MNRNGSTKDPRRMTGAATGEI.

It belongs to the polyphosphate kinase 2 (PPK2) family. Class I subfamily. The cofactor is Mg(2+).

The enzyme catalyses [phosphate](n) + ATP = [phosphate](n+1) + ADP. It carries out the reaction [phosphate](n) + CTP = [phosphate](n+1) + CDP. It catalyses the reaction [phosphate](n) + GTP = [phosphate](n+1) + GDP. The catalysed reaction is [phosphate](n) + UTP = [phosphate](n+1) + UDP. Uses inorganic polyphosphate (polyP) as a donor to convert NDP to NTP. PolyP hydrolysis is slightly faster with UDP, but it can also use ADP, GDP and CDP. The polypeptide is NDP-polyphosphate phosphotransferase 3 (Ruegeria pomeroyi (strain ATCC 700808 / DSM 15171 / DSS-3) (Silicibacter pomeroyi)).